We begin with the raw amino-acid sequence, 341 residues long: Galactofuranose transporter permease protein YtfT (341 aa).

Over 1 to 25 the chain is Cytoplasmic; it reads MMPQSLPDTTTPKRRFRWPTGMPQL. The helical transmembrane segment at 26-46 threads the bilayer; sequence VALLLVLLVDSLVAPHFWQVV. The Periplasmic segment spans residues 47–65; it reads LQDGRLFGSPIDILNRAAP. A run of 2 helical transmembrane segments spans residues 66-86 and 87-107; these read VALL…DLSV and GAVM…GFSL. A topological domain (periplasmic) is located at residue proline 108. The helical transmembrane segment at 109 to 129 threads the bilayer; the sequence is IVLLSALGTGILAGLWNGILV. The Cytoplasmic segment spans residues 130-136; sequence AILKIQP. Residues 137–157 traverse the membrane as a helical segment; the sequence is FVATLILMVAGRGVAQLITAG. The Periplasmic portion of the chain corresponds to 158–174; the sequence is QIVTFNSPDLSWFGSGS. The helical transmembrane segment at 175–195 threads the bilayer; it reads LLFLPTPVIIAVLTLILFWLL. The Cytoplasmic segment spans residues 196–223; sequence TRKTALGMFIEAVGINIRAAKNAGVNTR. The chain crosses the membrane as a helical span at residues 224 to 244; the sequence is IIVMLTYVLSGLCAAIAGIIV. At 245 to 255 the chain is on the periplasmic side; that stretch reads AADIRGADANN. A helical transmembrane segment spans residues 256–276; the sequence is AGLWLELDAILAVVIGGGSLM. At 277–281 the chain is on the cytoplasmic side; that stretch reads GGRFN. The next 2 membrane-spanning stretches (helical) occupy residues 282 to 302 and 303 to 323; these read LLLS…ILLS and GFPP…VLIV. The Cytoplasmic segment spans residues 324–341; sequence QSQRFISLIKGVRSRDKT.

This sequence belongs to the binding-protein-dependent transport system permease family. AraH/RbsC subfamily. The complex is composed of two ATP-binding proteins (YtfR), two transmembrane proteins (YtfT and YjfF) and a solute-binding protein (YtfQ).

It localises to the cell inner membrane. Part of the ABC transporter complex YtfQRT-YjfF involved in galactofuranose transport. Probably responsible for the translocation of the substrate across the membrane. In Escherichia coli (strain K12), this protein is Galactofuranose transporter permease protein YtfT (ytfT).